Here is a 112-residue protein sequence, read N- to C-terminus: Putative movement protein (112 aa).

The helical transmembrane segment at 27–47 (IGIIMLCIVGIVVLWVLIILC) threads the bilayer. The segment at 77 to 112 (TGTPFEETGPHRERRWAERRTEATNQNNNDNVNRFS) is disordered. Positions 84 to 98 (TGPHRERRWAERRTE) are enriched in basic and acidic residues. Positions 101 to 112 (NQNNNDNVNRFS) are enriched in polar residues.

This sequence belongs to the nanovirus movement protein family.

Its subcellular location is the host cell membrane. May transport viral genome to neighboring plant cells directly through plasmosdesmata, without any budding. The movement protein allows efficient cell to cell propagation, by bypassing the host cell wall barrier. The polypeptide is Putative movement protein (DNA-M) (Subterranean clover stunt virus (strain F) (SCSV)).